An 87-amino-acid polypeptide reads, in one-letter code: UPF0250 protein plu1293 (87 aa).

It belongs to the UPF0250 family.

The chain is UPF0250 protein plu1293 from Photorhabdus laumondii subsp. laumondii (strain DSM 15139 / CIP 105565 / TT01) (Photorhabdus luminescens subsp. laumondii).